The primary structure comprises 207 residues: MSEAAHSGAAPADLVELGRIASAYGVKGWVKVQPHSAQAEVLRTVSHWWLTRPAPQAARGVVASVPRAYQVLQARVHGGAVVAQLAGIDDRDQAEALRGCLVQAARSAFPAPADDEYYWVDLIGCALYSDADGESRLLGVVDEVFDNGAHAVLKVLRQQLQPGQPGPVPLVDPKGRPLEELVPFVRAHIRHVDLAARRIDSDWPLDY.

The PRC barrel domain occupies 114–207 (DDEYYWVDLI…RIDSDWPLDY (94 aa)).

This sequence belongs to the RimM family. Binds ribosomal protein uS19.

Its subcellular location is the cytoplasm. Its function is as follows. An accessory protein needed during the final step in the assembly of 30S ribosomal subunit, possibly for assembly of the head region. Essential for efficient processing of 16S rRNA. May be needed both before and after RbfA during the maturation of 16S rRNA. It has affinity for free ribosomal 30S subunits but not for 70S ribosomes. In Bordetella bronchiseptica (strain ATCC BAA-588 / NCTC 13252 / RB50) (Alcaligenes bronchisepticus), this protein is Ribosome maturation factor RimM.